The sequence spans 807 residues: Centrosomal protein of 97 kDa (807 aa).

LRR repeat units follow at residues 34–55 (DTQT…EKCR), 56–77 (NLVQ…AKLI), 78–99 (HLRV…KDLV), 100–121 (HLEW…NSST), 122–143 (SLQH…SKLK), 144–165 (SLKT…SACL), and 168–189 (SLTI…AFLA). One can recognise an LRRCT domain in the interval 208–246 (TPSIPGFDYRPFIVSWCLNLKVLDGYVVSQKESLKAEWL). A disordered region spans residues 306 to 330 (RSDGYLTSSTPNKRLPLSTEHHSPT). Residues 519 to 548 (ISKAATKLQSCWRGFYARKYNPKVKDVCYE) form the IQ domain. Positions 607-623 (TANSSENDLPSASNSKH) are enriched in polar residues. Positions 607–756 (TANSSENDLP…RPEITTCSDN (150 aa)) are disordered. Positions 681–690 (TGRHYNDKVP) are enriched in basic and acidic residues. Positions 704–724 (SQSSKDSFTSEQDSSLLQQYL) are enriched in polar residues.

The protein resides in the cytoplasm. The protein localises to the cytoskeleton. It is found in the microtubule organizing center. It localises to the centrosome. Acts as a key negative regulator of ciliogenesis in collaboration with ccp110 by capping the mother centriole thereby preventing cilia formation. Required for recruitment of ccp110 to the centrosome. This is Centrosomal protein of 97 kDa (cep97) from Xenopus laevis (African clawed frog).